A 1044-amino-acid chain; its full sequence is Elongation factor 3A (1044 aa).

At S2 the chain carries N-acetylserine. The stretch at 5–42 (QQSIKVLEELFQKLSVATADNRHEIASEVASFLNGNII) is one HEAT 1 repeat. The ADP site is built by I42, H44, and S83. HEAT repeat units lie at residues 86 to 123 (PYIV…AVNP), 125 to 162 (AIKA…AAKD), 166 to 203 (LRMP…TVDN), 205 to 241 (DIER…EVTP), 242 to 279 (ATLS…LVED), and 285 to 323 (PFLG…VGNV). 2 positions are modified to N6,N6,N6-trimethyllysine: K187 and K196. Residue K350 forms a Glycyl lysine isopeptide (Lys-Gly) (interchain with G-Cter in ubiquitin) linkage. ADP contacts are provided by T392, H396, and E397. Residues 426–641 (DEGEDLCNCE…CPAAKAYEEL (216 aa)) enclose the ABC transporter 1 domain. Residue K636 forms a Glycyl lysine isopeptide (Lys-Gly) (interchain with G-Cter in ubiquitin) linkage. Phosphoserine is present on S642. Residues 667–993 (VKVTNMEFQY…AGPRIEKKED (327 aa)) enclose the ABC transporter 2 domain. N703 serves as a coordination point for ADP. K789 is modified (N6,N6,N6-trimethyllysine). E922, N925, and H951 together coordinate ADP. T972 bears the Phosphothreonine mark. S974 is subject to Phosphoserine. Residues 974–1044 (SGHNWVSGQG…DAYVSSDEEF (71 aa)) form a disordered region. A compositionally biased stretch (basic residues) spans 1007 to 1031 (GGKKKKKLSSAELRKKKKERMKKKK). Residues S1039 and S1040 each carry the phosphoserine modification.

It belongs to the ABC transporter superfamily. ABCF family. EF3 subfamily. Monomer. Interacts with elongation factor 1A (eEF1A). Interacts through its N-terminus with 18S rRNA. Associates with ribosomes; preferentially binds ribosomes in the post-translocational state (bearing a peptidyl-tRNA in the P-site) in the presence of ATP, suggesting that ATP hydrolysis is required for ribosome dissociation.

It localises to the cytoplasm. Its subcellular location is the cytosol. It catalyses the reaction ATP + H2O = ADP + phosphate + H(+). The protein operates within protein biosynthesis; polypeptide chain elongation. Inhibited by the translational inhibitors neomycin and alpha-sarcin, which suppress the ATPase activity. Functionally, ribosome-dependent ATPase that functions in cytoplasmic translation elongation. Required for the ATP-dependent release of deacylated tRNA from the ribosomal E-site during protein biosynthesis. Stimulates the eEF1A-dependent binding of aminoacyl-tRNA to the ribosomal A-site, which has reduced affinity for tRNA as long as the E-site is occupied. Assists translation termination by stimulating the release of nascent protein from the ribosome by release factors. In nutrient-replete conditions, occupies the space on the ribosome bound by GCN1 during amino acid starvation conditions, and therefore indirectly negatively regulates GCN2 kinase activity in replete conditions. This is Elongation factor 3A (YEF3) from Saccharomyces cerevisiae (strain ATCC 204508 / S288c) (Baker's yeast).